A 397-amino-acid chain; its full sequence is Ubiquitin-like modifier-activating enzyme 5 (397 aa).

Residues G76, D97, K120, N143, and N177 each contribute to the ATP site. C219 and C222 together coordinate Zn(2+). C243 (glycyl thioester intermediate) is an active-site residue. Zn(2+)-binding residues include C296 and C301. The interval 343–384 (PSDAPTDLSQSTDVGQGLRLAYEAPEKSSAEATQAATAPVDD) is disordered.

This sequence belongs to the ubiquitin-activating E1 family. UBA5 subfamily.

Functionally, E1-like enzyme which activates UFM1. The polypeptide is Ubiquitin-like modifier-activating enzyme 5 (Drosophila pseudoobscura pseudoobscura (Fruit fly)).